The sequence spans 2546 residues: Formin-J (2546 aa).

Disordered regions lie at residues 1–40 (MEEN…SFVK), 61–108 (ENSN…PLSE), 188–270 (KNIT…PNSA), 369–414 (TTNN…SSSS), 502–541 (TNSF…TPNS), 802–849 (SSIS…NTRK), 879–898 (TSVP…NNNN), 987–1101 (TTNN…GGIG), 1485–1529 (PKSK…ASLS), 1558–1601 (KRSK…FKSP), 1659–1775 (INNI…KVNS), 1840–1869 (VPTT…ETQS), and 2014–2033 (SNLS…SSLE). 2 stretches are compositionally biased toward low complexity: residues 16-37 (NNNE…SSSS) and 62-98 (NSNN…NSTS). Composition is skewed to polar residues over residues 99–108 (GSKDNTPLSE) and 188–198 (KNITPSKNNSP). Low complexity-rich tracts occupy residues 203 to 237 (NNNN…NNNN) and 247 to 270 (NKNS…PNSA). Polar residues predominate over residues 377–389 (AESLTTYSESSEI). Low complexity-rich tracts occupy residues 390–414 (STDS…SSSS) and 502–513 (TNSFGSSTTTTI). Residues 391–444 (TDSTGVCSSSSSTSSTLSSKSSSSSSFNKFMEFLLIYIEDNDSTNGTWVNGNKL) enclose the FHA domain. The GBD/FH3 domain occupies 457–963 (KITLSTPDFS…SSISNEQEYQ (507 aa)). Polar residues-rich tracts occupy residues 879–891 (TSVP…KNPL) and 992–1007 (SSAK…NKSP). Residues 1033-1042 (VPPPPPPPPG) show a composition bias toward pro residues. The segment covering 1043 to 1056 (GNNNNESDVPSSSG) has biased composition (low complexity). The segment covering 1057–1097 (GPPPPPPPPPPPGKSSGGGPPPPPPPPPKGGKGGPPPPPPI) has biased composition (pro residues). The 27-residue stretch at 1072–1098 (SGGGPPPPPPPPPKGGKGGPPPPPPIG) folds into the FH1 domain. The 390-residue stretch at 1106 to 1495 (KVKEEQPSVP…KSKKYQEQQN (390 aa)) folds into the FH2 domain. Residues 1492–1502 (EQQNKPTQNND) show a composition bias toward polar residues. The segment covering 1507–1529 (SKLSNLPSSSSINDESSSSASLS) has biased composition (low complexity). In terms of domain architecture, DAD spans 1563–1593 (EQEPVVEPIQITPKVGSAASAEPSPSIKSRD). The span at 1665–1679 (SSSSSSSSSSSSSSS) shows a compositional bias: low complexity. Residues 1687 to 1717 (HNTESEIKKEFISNSSMDKDKEKIKEKEKGT) are compositionally biased toward basic and acidic residues. The segment covering 1732–1745 (KSTTTSPSSSSSKK) has biased composition (low complexity). Over residues 1746–1757 (QIPSLSECLQES) the composition is skewed to polar residues. 2 stretches are compositionally biased toward low complexity: residues 1763–1775 (RSSS…KVNS) and 1841–1853 (PTTT…TTQT). Residues 2067-2118 (IDDNQQKQQKQQQQQQQQQQQQQQLPQPQQQQQQQQQQQQQQQQQQQQQQQQ) adopt a coiled-coil conformation. Residues 2121–2154 (QQSTTTTTISTHHPQLKQVQPQSPSSLSQQPTQQ) show a composition bias toward low complexity. Disordered regions lie at residues 2121–2369 (QQST…PKTV), 2381–2473 (SHKK…SYSS), and 2485–2510 (SPSS…LKTP). Positions 2160 to 2179 (QPSSPLQSHYKPQQKPQTTY) are enriched in polar residues. Low complexity-rich tracts occupy residues 2188–2206 (ANPF…SNAS) and 2237–2256 (SSAS…TPLS). A compositionally biased stretch (polar residues) spans 2274–2287 (TPPSSSISNSTATT). The span at 2302 to 2315 (SPSSSSLEQSSNAS) shows a compositional bias: low complexity. Basic residues predominate over residues 2332 to 2342 (FKKHKKSHSKS). Low complexity-rich tracts occupy residues 2388–2439 (VDQS…SSSS), 2459–2473 (NISS…SYSS), and 2485–2497 (SPSS…KPSP). Polar residues predominate over residues 2499 to 2508 (AVSSTSSTLK).

It belongs to the formin homology family. Diaphanous subfamily. Interacts (via GBD/FH3 domain) with activated Rho-GTPases.

In terms of biological role, formins play an important role in the nucleation of actin and the formation of linear actin filaments. The chain is Formin-J (forJ) from Dictyostelium discoideum (Social amoeba).